A 453-amino-acid chain; its full sequence is Transcription factor radR (453 aa).

Residues Met-1 to Asn-30 show a composition bias toward polar residues. Residues Met-1–Arg-45 form a disordered region. Positions Asn-30–Ile-62 constitute a bZIP domain. Residues Lys-33–Arg-50 form a basic motif region. The leucine-zipper stretch occupies residues Ile-51–Leu-58. Positions Ala-160–Gly-184 are disordered. Polar residues predominate over residues Ala-170 to Pro-181.

The protein belongs to the bZIP family.

It is found in the nucleus. Transcription factor that positively regulates the expression of the gene clusters that mediate the biosynthesis of pestheic acid, a diphenyl ether which is a biosynthetic precursor of the unique chloropupukeananes. The chain is Transcription factor radR from Floropilus chiversii (Chaetomium chiversii).